We begin with the raw amino-acid sequence, 479 residues long: Glutamyl-tRNA(Gln) amidotransferase subunit A (479 aa).

Catalysis depends on charge relay system residues Lys-71 and Ser-146. Catalysis depends on Ser-170, which acts as the Acyl-ester intermediate.

The protein belongs to the amidase family. GatA subfamily. Heterotrimer of A, B and C subunits.

It carries out the reaction L-glutamyl-tRNA(Gln) + L-glutamine + ATP + H2O = L-glutaminyl-tRNA(Gln) + L-glutamate + ADP + phosphate + H(+). Functionally, allows the formation of correctly charged Gln-tRNA(Gln) through the transamidation of misacylated Glu-tRNA(Gln) in organisms which lack glutaminyl-tRNA synthetase. The reaction takes place in the presence of glutamine and ATP through an activated gamma-phospho-Glu-tRNA(Gln). In Lactobacillus acidophilus (strain ATCC 700396 / NCK56 / N2 / NCFM), this protein is Glutamyl-tRNA(Gln) amidotransferase subunit A.